A 465-amino-acid polypeptide reads, in one-letter code: tRNA-2-methylthio-N(6)-dimethylallyladenosine synthase (465 aa).

Residues 18-136 form the MTTase N-terminal domain; the sequence is RKLYIETYGC…LPNLVGAAEQ (119 aa). The [4Fe-4S] cluster site is built by cysteine 27, cysteine 63, cysteine 100, cysteine 174, cysteine 178, and cysteine 181. One can recognise a Radical SAM core domain in the interval 160–392; that stretch reads GGVHINGFVS…IALQNRLSEE (233 aa). A TRAM domain is found at 395–458; it reads KRDISKTFEV…SATLFGEVVE (64 aa).

It belongs to the methylthiotransferase family. MiaB subfamily. As to quaternary structure, monomer. [4Fe-4S] cluster serves as cofactor.

It localises to the cytoplasm. The enzyme catalyses N(6)-dimethylallyladenosine(37) in tRNA + (sulfur carrier)-SH + AH2 + 2 S-adenosyl-L-methionine = 2-methylsulfanyl-N(6)-dimethylallyladenosine(37) in tRNA + (sulfur carrier)-H + 5'-deoxyadenosine + L-methionine + A + S-adenosyl-L-homocysteine + 2 H(+). In terms of biological role, catalyzes the methylthiolation of N6-(dimethylallyl)adenosine (i(6)A), leading to the formation of 2-methylthio-N6-(dimethylallyl)adenosine (ms(2)i(6)A) at position 37 in tRNAs that read codons beginning with uridine. The polypeptide is tRNA-2-methylthio-N(6)-dimethylallyladenosine synthase (Porphyromonas gingivalis (strain ATCC 33277 / DSM 20709 / CIP 103683 / JCM 12257 / NCTC 11834 / 2561)).